The primary structure comprises 839 residues: MDRTAASRPDLYLIADQDTVYEQDLFRAPGSIKPWLAYIEYKQQNGTLYEQAFVMERACKQLPRSYKLWKMYLEFRINHLRGRNATKYRAEYQKVNALFERALILLNKMPKIWEMYLSFLLQQPLVTQTRRTFDRALRALPITQHNRIWKLYKAFARSASGQTAVKIWARYMQIHPENAEDYIELLVELGQYTEAVKRYMEILDDPRFQSKKGKSNFQLWTEMVDLLVSKAKQIRTGPQVGIDVDAILRSGIDRFADQRGKLWAGLATYWITKGNFEKARDVFEEGITTVMTVRDFTLIFDAYVEFEESIIGSLMEAAAVRADKGNVDEDADFDLDLRMLRFEQLMDRRPFLVNDVLLRQNPNNVIEWEKRVALWGDNKEEIVNTYTAAIAAINPKKAHGKFSELWVNYAKFYESGGDLDTARVIFDKAVKVPFKSVAELADTWCEWAEMELRSENFDKAVDIMAKATQAPKKSTVDYFDETLSPQQRVHKSWKLWSFYVDLVESVATLEETRKVYERIFELRIATPQTVVNYANLLEEHKYFEDSFKVYERGLDLFSYPVAFELWNLYLTKAVDRKIGIERLRDLFEQALDGCPPKFAKPLYLMYGNLEEERGLARHAMRIYERATRAVSDEDRFEMFEFYITKSASNFGLTSTRPIYERAIAALPDQEAKEMCLKFADMERRLGEIDRARAIYGHASQFCDPRTNAGFWQKWEAFEVQHGNEDTFKEMLRIKRSVQAQYNTDVNFIASQAIARSQQRAQEGAREREGEEAGTDASKERADAMAALERQARAPIGFVAASTGPEGGNRPPPPGQQQQPQPSAPVNPDAIDLDDDMDAE.

HAT repeat units follow at residues 12 to 44 (YLIA…YKQQ), 46 to 78 (GTLY…FRIN), 90 to 122 (AEYQ…FLLQ), 124 to 158 (PLVT…FARS), 274 to 309 (GNFE…FEES), 377 to 415 (DNKE…FYES), 417 to 453 (GDLD…MELR), 470 to 502 (APKK…YVDL), 507 to 539 (ATLE…LLEE), 541 to 575 (KYFE…KAVD), 578 to 612 (IGIE…LEEE), 650 to 684 (FGLT…MERR), and 686 to 720 (GEID…FEVQ). The segment at 758 to 839 (QRAQEGARER…IDLDDDMDAE (82 aa)) is disordered. Positions 762 to 782 (EGAREREGEEAGTDASKERAD) are enriched in basic and acidic residues. Acidic residues predominate over residues 830–839 (IDLDDDMDAE).

Belongs to the crooked-neck family. Associated with the spliceosome.

It is found in the nucleus. Its function is as follows. Involved in pre-mRNA splicing and cell cycle progression. The sequence is that of Pre-mRNA-splicing factor syf1 (syf1) from Aspergillus fumigatus (strain ATCC MYA-4609 / CBS 101355 / FGSC A1100 / Af293) (Neosartorya fumigata).